The primary structure comprises 459 residues: Fibrinogen C domain-containing protein 1 (459 aa).

The disordered stretch occupies residues 1–22; the sequence is MVHERWKTVGSASQLEDRPRDK. Residues 1–33 are Cytoplasmic-facing; that stretch reads MVHERWKTVGSASQLEDRPRDKPQRASCSYVLC. The chain crosses the membrane as a helical; Signal-anchor for type II membrane protein span at residues 34–54; that stretch reads TVLLSLAVLLAVAVTGVVLFL. The Extracellular segment spans residues 55–459; it reads NHTHTPGTAP…MKIRPVREDR (405 aa). The Fibrinogen C-terminal domain occupies 233–456; the sequence is CANGSRPRDC…FSEMKIRPVR (224 aa). An intrachain disulfide couples Cys-242 to Cys-271. Asn-338 is a glycosylation site (N-linked (GlcNAc...) asparagine). Positions 391 and 393 each coordinate Ca(2+). Cys-399 and Cys-412 are disulfide-bonded.

Homotetramer; disulfide-linked.

Its subcellular location is the membrane. Its function is as follows. Acetyl group-binding receptor which shows a high-affinity and calcium-dependent binding to acetylated structures such as chitin, some N-acetylated carbohydrates, and amino acids, but not to their non-acetylated counterparts. Can facilitate the endocytosis of acetylated components. The chain is Fibrinogen C domain-containing protein 1 (Fibcd1) from Mus musculus (Mouse).